Here is a 536-residue protein sequence, read N- to C-terminus: SNW domain-containing protein 1 (536 aa).

The segment at 1 to 46 is disordered; it reads MALTSFLPAPTQLSQDQLEAEEKARSQRSRQTSLVSSRREPPPYGY. Ala2 bears the N-acetylalanine mark. Phosphoserine is present on Ser14. A Glycyl lysine isopeptide (Lys-Gly) (interchain with G-Cter in SUMO2) cross-link involves residue Lys23. The interval 59-79 is interaction with PPIL1; it reads GDGGAFPEIHVAQYPLDMGRK. Glycyl lysine isopeptide (Lys-Gly) (interchain with G-Cter in SUMO2) cross-links involve residues Lys81, Lys97, Lys115, Lys122, Lys141, Lys158, and Lys170. The interval 174–339 is SNW; sequence AQYIRYTPSQ…KARERRAGIK (166 aa). Phosphoserine occurs at positions 182 and 190. Lys193 is covalently cross-linked (Glycyl lysine isopeptide (Lys-Gly) (interchain with G-Cter in SUMO2)). Residues 209–233 form a disordered region; sequence PPRFKINKKIPRGPPSPPAPVMHSP. A phosphoserine mark is found at Ser224, Ser232, and Ser234. Residues Lys240, Lys258, Lys286, Lys339, Lys344, Lys416, Lys441, and Lys452 each participate in a glycyl lysine isopeptide (Lys-Gly) (interchain with G-Cter in SUMO2) cross-link. Residues 311–386 form a disordered region; that stretch reads KMAQKEKEKH…RSKLQRNENR (76 aa). Basic and acidic residues-rich tracts occupy residues 472-489 and 503-530; these read FVPD…RGRE and KFLE…EHEG. The segment at 472-536 is disordered; that stretch reads FVPDKEFSGS…EHEGKKRRKE (65 aa). 2 positions are modified to phosphoserine: Ser479 and Ser481. A Glycyl lysine isopeptide (Lys-Gly) (interchain with G-Cter in SUMO2) cross-link involves residue Lys509.

This sequence belongs to the SNW family. Identified in the spliceosome C complex. Associates with U4/U6-U5 tri-small nuclear ribonucleoproteins (U4/U6-U5 tri-snRNPs). Component of the minor spliceosome, which splices U12-type introns. Interacts with SKI, SMAD2,SMAD3, RBPJ, RB1, PABPN1, MAGEA1, SIRT1, FOXN3, U2AF2, PPIL1, DAXX and ATP1B4. Interacts with VDR and RXRA; preferentially associates with VDR:RXRA heterodimers. Interacts with NCOR2. Interacts with MAML1. Interacts with NOTCH1 NICD; the interaction involves multimerized NOTCH1 NICD. Forms a complex with NOTCH1 NICD and MAML1; the association is dissociated by RBPJ. Associates with positive transcription elongation factor b (P-TEFb). Component of the SNARP complex which consists at least of SNIP1, SNW1, THRAP3, BCLAF1 and PNN.

It is found in the nucleus. Its function is as follows. Involved in pre-mRNA splicing as component of the spliceosome. As a component of the minor spliceosome, involved in the splicing of U12-type introns in pre-mRNAs. Required in the specific splicing of CDKN1A pre-mRNA; the function probably involves the recruitment of U2AF2 to the mRNA. May recruit PPIL1 to the spliceosome. May be involved in cyclin-D1/CCND1 mRNA stability through the SNARP complex which associates with both the 3'end of the CCND1 gene and its mRNA. Involved in transcriptional regulation. Modulates TGF-beta-mediated transcription via association with SMAD proteins, MYOD1-mediated transcription via association with PABPN1, RB1-mediated transcriptional repression, and retinoid-X receptor (RXR)- and vitamin D receptor (VDR)-dependent gene transcription in a cell line-specific manner probably involving coactivators NCOA1 and GRIP1. Is involved in NOTCH1-mediated transcriptional activation. Binds to multimerized forms of Notch intracellular domain (NICD) and is proposed to recruit transcriptional coactivators such as MAML1 to form an intermediate preactivation complex which associates with DNA-bound CBF-1/RBPJ to form a transcriptional activation complex by releasing SNW1 and redundant NOTCH1 NICD. The protein is SNW domain-containing protein 1 (SNW1) of Bos taurus (Bovine).